The following is a 333-amino-acid chain: Ornithine carbamoyltransferase (333 aa).

Carbamoyl phosphate-binding positions include 56 to 59, Gln83, Arg107, and 134 to 137; these read STRT and HPTQ. Residues Asn167, Asp231, and 235-236 contribute to the L-ornithine site; that span reads SM. Carbamoyl phosphate-binding positions include 273-274 and Arg318; that span reads CL.

The protein belongs to the aspartate/ornithine carbamoyltransferase superfamily. OTCase family.

The protein localises to the cytoplasm. It carries out the reaction carbamoyl phosphate + L-ornithine = L-citrulline + phosphate + H(+). The protein operates within amino-acid biosynthesis; L-arginine biosynthesis; L-arginine from L-ornithine and carbamoyl phosphate: step 1/3. In terms of biological role, reversibly catalyzes the transfer of the carbamoyl group from carbamoyl phosphate (CP) to the N(epsilon) atom of ornithine (ORN) to produce L-citrulline. The sequence is that of Ornithine carbamoyltransferase (argF) from Staphylococcus aureus (strain Mu50 / ATCC 700699).